A 109-amino-acid chain; its full sequence is uncharacterized protein (109 aa).

Residues 67-96 (YFGNKLWRPTPRSGQSGQSRPKTGPHGSQR) are disordered. Residues 78 to 87 (RSGQSGQSRP) are compositionally biased toward polar residues.

This is an uncharacterized protein from Saccharomyces cerevisiae (strain ATCC 204508 / S288c) (Baker's yeast).